Consider the following 63-residue polypeptide: Large ribosomal subunit protein bL35 (63 aa).

Belongs to the bacterial ribosomal protein bL35 family.

This chain is Large ribosomal subunit protein bL35, found in Sulfurimonas denitrificans (strain ATCC 33889 / DSM 1251) (Thiomicrospira denitrificans (strain ATCC 33889 / DSM 1251)).